We begin with the raw amino-acid sequence, 145 residues long: D-aminoacyl-tRNA deacylase (145 aa).

A Gly-cisPro motif, important for rejection of L-amino acids motif is present at residues 137–138 (GP).

This sequence belongs to the DTD family. As to quaternary structure, homodimer.

It localises to the cytoplasm. The catalysed reaction is glycyl-tRNA(Ala) + H2O = tRNA(Ala) + glycine + H(+). It carries out the reaction a D-aminoacyl-tRNA + H2O = a tRNA + a D-alpha-amino acid + H(+). In terms of biological role, an aminoacyl-tRNA editing enzyme that deacylates mischarged D-aminoacyl-tRNAs. Also deacylates mischarged glycyl-tRNA(Ala), protecting cells against glycine mischarging by AlaRS. Acts via tRNA-based rather than protein-based catalysis; rejects L-amino acids rather than detecting D-amino acids in the active site. By recycling D-aminoacyl-tRNA to D-amino acids and free tRNA molecules, this enzyme counteracts the toxicity associated with the formation of D-aminoacyl-tRNA entities in vivo and helps enforce protein L-homochirality. The protein is D-aminoacyl-tRNA deacylase of Aeromonas hydrophila subsp. hydrophila (strain ATCC 7966 / DSM 30187 / BCRC 13018 / CCUG 14551 / JCM 1027 / KCTC 2358 / NCIMB 9240 / NCTC 8049).